We begin with the raw amino-acid sequence, 375 residues long: MAINIEYVILRHLQMELKAPFTTSFGTFQTKEFILVEVVDCDGVSGWGESVAFSVPWYSEETVKTNWHMLEEFLVPLLFSKPLRHPAELPERFAAIRQNNMAKAALEGAVWDLYAKRLGVPLCQALGGTKKEIEVGVSIGIQPTVDDLLQVIERYVAQGYRRIKVKIKPGWDVDVIRDVRRAFPDVPLMADANSAYTLADAKRLQALDEFGLMMIEQPLAADDLVDHARLQPLLKTPICLDESIRSYDDARKALDLGSCRIINIKIGRVGGLWEAKRIHDLCAERGVPVWCGGMLEAGVGRAHNIAITTLENFALPGDTAASSHYWERDIITPEVEVHNGLIRVPNAPGIGYDVDRRQVERYTQFAKLFHRTATA.

K166 serves as the catalytic Proton donor. Mg(2+) is bound by residues D191, E216, and D241. Residue K265 is the Proton acceptor of the active site.

It belongs to the mandelate racemase/muconate lactonizing enzyme family. MenC type 2 subfamily. Homotetramer. Requires a divalent metal cation as cofactor.

The enzyme catalyses (1R,6R)-6-hydroxy-2-succinyl-cyclohexa-2,4-diene-1-carboxylate = 2-succinylbenzoate + H2O. It catalyses the reaction N-acetyl-D-methionine = N-acetyl-L-methionine. It carries out the reaction N-acetyl-D-phenylalanine = N-acetyl-L-phenylalanine. It functions in the pathway quinol/quinone metabolism; 1,4-dihydroxy-2-naphthoate biosynthesis; 1,4-dihydroxy-2-naphthoate from chorismate: step 4/7. Its pathway is quinol/quinone metabolism; menaquinone biosynthesis. Its function is as follows. Converts 2-succinyl-6-hydroxy-2,4-cyclohexadiene-1-carboxylate (SHCHC) to 2-succinylbenzoate (OSB). Also acts as a N-succinylamino acid racemase (NSAR) that catalyzes the racemization of various N-succinylamino acids, including N-succinyl-alanine and N-succinyl-phenylalanine. Can catalyze the racemization of a broad range of N-acylamino acids, including N-acetyl-methionine, N-acetyl-phenylalanine, N-carbamoyl-methionine, N-formyl-D-methionine, N-formyl-D-norleucine and N-carbamoyl-D-norleucine. May be a bifunctional enzyme involved in menaquinone biosynthesis and in an irreversible pathway for the conversion of D- to L-amino acids, thereby facilitating the survival and/or growth of the organism. This chain is o-succinylbenzoate synthase, found in Geobacillus kaustophilus.